A 303-amino-acid polypeptide reads, in one-letter code: Siderophore enterobactin esterase (303 aa).

It belongs to the esterase D family. As to quaternary structure, homodimer.

The enzyme catalyses enterobactin + 3 H2O = 3 N-(2,3-dihydroxybenzoyl)-L-serine + 2 H(+). In terms of biological role, displays specific enterobactin (ENB) esterase activity required for intracellular release of iron. Enterobactin is a xenosiderophore that is selectively produced by Gram-negative Enterobacteriaceae. The affinity for enterobactin is quite high, potentially due to the low natural abundance of this xenosiderophore in fungal habitats. Does not hydrolyze triacetylfusarinine C (TAFC). This is Siderophore enterobactin esterase from Emericella nidulans (strain FGSC A4 / ATCC 38163 / CBS 112.46 / NRRL 194 / M139) (Aspergillus nidulans).